The following is a 242-amino-acid chain: Venom redulysin 2 (242 aa).

Positions 1–19 (MSKIWILLLLVGAVQFARG) are cleaved as a signal peptide. The propeptide occupies 20–46 (FPALEEEQEDDVIDWPSFEYDLSDEER).

The protein belongs to the redulysin-like family. Post-translationally, contains 5 disulfide bonds. As to expression, expressed by the venom gland (posterior main gland) (at protein level).

It is found in the secreted. In terms of biological role, highly abundant protein that may be responsible for the observed disruption of sensory neuron membranes, since it is homologous to proteins such as trialysin, which forms pores in lipid bilayers. Probable insecticidal toxin. This Platymeris rhadamanthus (Red spot assassin bug) protein is Venom redulysin 2.